Consider the following 466-residue polypeptide: Soluble pyridine nucleotide transhydrogenase (466 aa).

Glutamate 36 to cysteine 45 contacts FAD.

It belongs to the class-I pyridine nucleotide-disulfide oxidoreductase family. The cofactor is FAD.

Its subcellular location is the cytoplasm. It carries out the reaction NAD(+) + NADPH = NADH + NADP(+). Functionally, conversion of NADPH, generated by peripheral catabolic pathways, to NADH, which can enter the respiratory chain for energy generation. The sequence is that of Soluble pyridine nucleotide transhydrogenase from Escherichia coli O81 (strain ED1a).